We begin with the raw amino-acid sequence, 148 residues long: MKIAIGCDEMGYELKQTLITRLKEKNIEFTDFGSFENEKVLYPSIAEKVALEVKNNDYDRGILICGTGIGMAITANKIHGIRAAQIHDSYSAERARKSNDAHIMTMGALVIGPSLAVSLLDTWLDSDFSGGRSQAKVDLMEEIDQKNR.

Residue 8-9 (DE) participates in D-ribulose 5-phosphate binding. Residue Cys-65 is the Proton acceptor of the active site. D-ribulose 5-phosphate-binding positions include 66-70 (GTGIG), Asn-99, Arg-132, and Lys-136.

It belongs to the LacAB/RpiB family.

The enzyme catalyses aldehydo-D-ribose 5-phosphate = D-ribulose 5-phosphate. Its pathway is carbohydrate degradation; pentose phosphate pathway; D-ribose 5-phosphate from D-ribulose 5-phosphate (non-oxidative stage): step 1/1. Its function is as follows. Catalyzes the interconversion of ribulose-5-P and ribose-5-P. The chain is Ribose-5-P isomerase B from Listeria innocua serovar 6a (strain ATCC BAA-680 / CLIP 11262).